The following is a 117-amino-acid chain: Large ribosomal subunit protein bL19 (117 aa).

Belongs to the bacterial ribosomal protein bL19 family.

Functionally, this protein is located at the 30S-50S ribosomal subunit interface and may play a role in the structure and function of the aminoacyl-tRNA binding site. This chain is Large ribosomal subunit protein bL19, found in Alkaliphilus metalliredigens (strain QYMF).